The sequence spans 284 residues: S-formylglutathione hydrolase (284 aa).

A2 carries the N-acetylalanine modification. 2 residues coordinate substrate: N63 and K67. Active-site charge relay system residues include S152, D229, and H262.

This sequence belongs to the esterase D family. In terms of assembly, homodimer.

The catalysed reaction is S-formylglutathione + H2O = formate + glutathione + H(+). Activity toward p-nitrophenyl acetate inhibited by N-ethylmaleimide, 10-(fluoroethoxyphosphinyl)-N-(biotinamidopentyl)decanamide (FP-biotin), iodoacetamide, CuCl(2) and ZnSO(4), but not by phenylmethylsulfonyl fluoride, EDTA, Mg(2+), Mn(2+), Ca(2+) or paraoxon, an organo-phosphate inhibitor of serine hydrolases. In terms of biological role, serine hydrolase which catalyzes the hydrolysis of S-formylglutathione to glutathione and formic acid. Also hydrolyzes S-acetylglutathione and a range of carboxyesters in vitro. Involved in the detoxification of formaldehyde. The polypeptide is S-formylglutathione hydrolase (SFGH) (Arabidopsis thaliana (Mouse-ear cress)).